The primary structure comprises 209 residues: Thymidylate kinase (209 aa).

10–17 provides a ligand contact to ATP; sequence GLDGAGKS.

The protein belongs to the thymidylate kinase family.

The catalysed reaction is dTMP + ATP = dTDP + ADP. In terms of biological role, phosphorylation of dTMP to form dTDP in both de novo and salvage pathways of dTTP synthesis. The chain is Thymidylate kinase from Francisella tularensis subsp. novicida (strain U112).